The chain runs to 77 residues: Large ribosomal subunit protein eL20 (77 aa).

Belongs to the eukaryotic ribosomal protein eL20 family. Part of the 50S ribosomal subunit. Binds 23S rRNA.

In Pyrococcus abyssi (strain GE5 / Orsay), this protein is Large ribosomal subunit protein eL20.